Consider the following 311-residue polypeptide: Olfactory receptor 1073 (311 aa).

Topologically, residues 1–25 are extracellular; that stretch reads MKQQNDTQILQFLLLGLSENTELQP. Residue asparagine 5 is glycosylated (N-linked (GlcNAc...) asparagine). The helical transmembrane segment at 26-46 threads the bilayer; the sequence is LIYWLFFSMYLVTVWGNLIII. At 47 to 57 the chain is on the cytoplasmic side; the sequence is LATVLDFRLHT. The chain crosses the membrane as a helical span at residues 58–78; the sequence is AMYFFLCNLSFVDICLISTTI. The Extracellular segment spans residues 79–97; sequence PKMLANVHLNHKAITYEGC. A disulfide bridge connects residues cysteine 97 and cysteine 179. The chain crosses the membrane as a helical span at residues 98–118; that stretch reads IMQIYFFTLFVGLDNFLLAVM. Residues 119-133 lie on the Cytoplasmic side of the membrane; the sequence is AYDRFVAICHPLRYT. Residues 134-154 form a helical membrane-spanning segment; that stretch reads SIMTPHLCMSLVLVSWIASVL. An N-linked (GlcNAc...) asparagine glycan is attached at asparagine 155. Topologically, residues 155 to 196 are extracellular; that stretch reads NSSLQSFLVLQLSFCTEVEIPHFFCELSMLVHLACSDTFLSD. The chain crosses the membrane as a helical span at residues 197–217; it reads MAMNVLAALLGGGCLVGILYS. Topologically, residues 218–244 are cytoplasmic; sequence YSKIVSSIQAISSAEGKYKAFSTCVSH. The helical transmembrane segment at 245-265 threads the bilayer; that stretch reads LSVVSLFYCTLLGVYLSSAVT. The Extracellular segment spans residues 266-271; it reads QNSHST. A helical membrane pass occupies residues 272 to 292; sequence AATSLMYTVVTPMLNPFIYSL. Residues 293-311 lie on the Cytoplasmic side of the membrane; that stretch reads RNDNIKRALKNFVKKKLEK.

Belongs to the G-protein coupled receptor 1 family. In terms of tissue distribution, tongue specific.

It is found in the cell membrane. In terms of biological role, possible taste receptor. The protein is Olfactory receptor 1073 (Olr1073) of Rattus norvegicus (Rat).